A 173-amino-acid polypeptide reads, in one-letter code: Cyclic pyranopterin monophosphate synthase (173 aa).

Residues 75-77 (MCH) and 117-118 (ME) each bind substrate. Residue Asp-132 is part of the active site. A disordered region spans residues 152–173 (SGGKSGHYQRENSSVGGFANEQ). Positions 162 to 173 (ENSSVGGFANEQ) are enriched in polar residues.

The protein belongs to the MoaC family. In terms of assembly, homohexamer; trimer of dimers.

It carries out the reaction (8S)-3',8-cyclo-7,8-dihydroguanosine 5'-triphosphate = cyclic pyranopterin phosphate + diphosphate. Its pathway is cofactor biosynthesis; molybdopterin biosynthesis. Its function is as follows. Catalyzes the conversion of (8S)-3',8-cyclo-7,8-dihydroguanosine 5'-triphosphate to cyclic pyranopterin monophosphate (cPMP). This Geobacillus sp. (strain WCH70) protein is Cyclic pyranopterin monophosphate synthase.